The sequence spans 445 residues: Histamine H3 receptor (445 aa).

Topologically, residues 1–39 (MERAPPDGLMNASGALAGEAAAAGGARGFSAAWTAVLAA) are extracellular. The N-linked (GlcNAc...) asparagine glycan is linked to N11. The chain crosses the membrane as a helical span at residues 40–60 (LMALLIVATVLGNALVMLAFV). Residues 61-70 (ADSSLRTQNN) lie on the Cytoplasmic side of the membrane. The helical transmembrane segment at 71–91 (FFLLNLAISDFLVGAFCIPLY) threads the bilayer. Residues 92–108 (VPYVLTGRWTFGRGLCK) are Extracellular-facing. Residues C107 and C188 are joined by a disulfide bond. The helical transmembrane segment at 109 to 129 (LWLVVDYLLCASSVFNIVLIS) threads the bilayer. The Cytoplasmic portion of the chain corresponds to 130 to 156 (YDRFLSVTRAVSYRAQQGDTRRAVRKM). The chain crosses the membrane as a helical span at residues 157–177 (ALVWVLAFLLYGPAILSWEYL). Over 178–196 (SGGSSIPEGHCYAEFFYNW) the chain is Extracellular. A helical membrane pass occupies residues 197–217 (YFLITASTLEFFTPFLSVTFF). Residues 218–359 (NLSIYLNIQR…LSRDKKVAKS (142 aa)) lie on the Cytoplasmic side of the membrane. Disordered stretches follow at residues 234–259 (DGGR…PSCW) and 273–336 (HRYG…LEKR). Pro residues predominate over residues 241–256 (PEPPPDAQPSPPPAPP). Residues 289–299 (AGLGGGSGGGA) show a composition bias toward gly residues. Low complexity predominate over residues 300–312 (AASPTSSSGSSSR). The helical transmembrane segment at 360 to 380 (LAIIVSIFGLCWAPYTLLMII) threads the bilayer. At 381–396 (RAACHGHCVPDYWYET) the chain is on the extracellular side. The chain crosses the membrane as a helical span at residues 397–417 (SFWLLWANSAVNPVLYPLCHY). At 418-445 (SFRRAFTKLLCPQKLKVQPHGSLEQCWK) the chain is on the cytoplasmic side. The residue at position 439 (S439) is a Phosphoserine.

This sequence belongs to the G-protein coupled receptor 1 family.

The protein localises to the cell membrane. Its function is as follows. The H3 subclass of histamine receptors could mediate the histamine signals in CNS and peripheral nervous system. Signals through the inhibition of adenylate cyclase and displays high constitutive activity (spontaneous activity in the absence of agonist). This is Histamine H3 receptor (Hrh3) from Mus musculus (Mouse).